The chain runs to 394 residues: Mannosyl-3-phosphoglycerate synthase (394 aa).

It belongs to the glycosyltransferase 2 family.

The protein resides in the cytoplasm. The catalysed reaction is (2R)-3-phosphoglycerate + GDP-alpha-D-mannose = 2-O-(alpha-D-mannosyl)-3-phosphoglycerate + GDP + H(+). It participates in carbohydrate biosynthesis; 2-(alpha-D-mannosyl)-D-glycerate biosynthesis; 2-(alpha-D-mannosyl)-D-glycerate from GDP-alpha-D-mannose (MPG route): step 1/2. Transfers a mannosyl group from GDP-mannose to phosphoglycerate to form mannosyl-3-phosphoglycerate (MPG). This Pyrococcus furiosus (strain ATCC 43587 / DSM 3638 / JCM 8422 / Vc1) protein is Mannosyl-3-phosphoglycerate synthase (mngA).